The following is a 184-amino-acid chain: ATP synthase subunit b, chloroplastic (184 aa).

Residues 27 to 49 form a helical membrane-spanning segment; that stretch reads LATNPINLSVVLGVLIFFGKGVL.

This sequence belongs to the ATPase B chain family. In terms of assembly, F-type ATPases have 2 components, F(1) - the catalytic core - and F(0) - the membrane proton channel. F(1) has five subunits: alpha(3), beta(3), gamma(1), delta(1), epsilon(1). F(0) has four main subunits: a(1), b(1), b'(1) and c(10-14). The alpha and beta chains form an alternating ring which encloses part of the gamma chain. F(1) is attached to F(0) by a central stalk formed by the gamma and epsilon chains, while a peripheral stalk is formed by the delta, b and b' chains.

The protein localises to the plastid. Its subcellular location is the chloroplast thylakoid membrane. Its function is as follows. F(1)F(0) ATP synthase produces ATP from ADP in the presence of a proton or sodium gradient. F-type ATPases consist of two structural domains, F(1) containing the extramembraneous catalytic core and F(0) containing the membrane proton channel, linked together by a central stalk and a peripheral stalk. During catalysis, ATP synthesis in the catalytic domain of F(1) is coupled via a rotary mechanism of the central stalk subunits to proton translocation. Component of the F(0) channel, it forms part of the peripheral stalk, linking F(1) to F(0). This Lepidium virginicum (Virginia pepperweed) protein is ATP synthase subunit b, chloroplastic.